Here is a 276-residue protein sequence, read N- to C-terminus: NADPH-dependent 7-cyano-7-deazaguanine reductase (276 aa).

83–85 contributes to the substrate binding site; the sequence is IES. NADPH is bound at residue 85–86; sequence SK. Catalysis depends on C184, which acts as the Thioimide intermediate. The Proton donor role is filled by D191. 223–224 is a binding site for substrate; that stretch reads HE. 252 to 253 is an NADPH binding site; the sequence is RG.

This sequence belongs to the GTP cyclohydrolase I family. QueF type 2 subfamily. Homodimer.

The protein resides in the cytoplasm. The enzyme catalyses 7-aminomethyl-7-carbaguanine + 2 NADP(+) = 7-cyano-7-deazaguanine + 2 NADPH + 3 H(+). Its pathway is tRNA modification; tRNA-queuosine biosynthesis. Functionally, catalyzes the NADPH-dependent reduction of 7-cyano-7-deazaguanine (preQ0) to 7-aminomethyl-7-deazaguanine (preQ1). The polypeptide is NADPH-dependent 7-cyano-7-deazaguanine reductase (Pseudomonas aeruginosa (strain LESB58)).